Here is a 149-residue protein sequence, read N- to C-terminus: uncharacterized protein (149 aa).

The segment covering 130-144 (ESNVTKENIEIKEEK) has biased composition (basic and acidic residues). A disordered region spans residues 130–149 (ESNVTKENIEIKEEKEENSE).

This is an uncharacterized protein from Methanocaldococcus jannaschii (strain ATCC 43067 / DSM 2661 / JAL-1 / JCM 10045 / NBRC 100440) (Methanococcus jannaschii).